Consider the following 262-residue polypeptide: Type III pantothenate kinase (262 aa).

Aspartate 6–valine 13 is an ATP binding site. Residues tyrosine 101 and glycine 108–arginine 111 each bind substrate. Catalysis depends on aspartate 110, which acts as the Proton acceptor. Position 130 (aspartate 130) interacts with K(+). Threonine 133 contacts ATP. Threonine 186 is a binding site for substrate.

The protein belongs to the type III pantothenate kinase family. Homodimer. Requires NH4(+) as cofactor. K(+) serves as cofactor.

It is found in the cytoplasm. The enzyme catalyses (R)-pantothenate + ATP = (R)-4'-phosphopantothenate + ADP + H(+). Its pathway is cofactor biosynthesis; coenzyme A biosynthesis; CoA from (R)-pantothenate: step 1/5. Functionally, catalyzes the phosphorylation of pantothenate (Pan), the first step in CoA biosynthesis. This chain is Type III pantothenate kinase, found in Desulforapulum autotrophicum (strain ATCC 43914 / DSM 3382 / VKM B-1955 / HRM2) (Desulfobacterium autotrophicum).